We begin with the raw amino-acid sequence, 341 residues long: S-adenosylmethionine:tRNA ribosyltransferase-isomerase (341 aa).

The protein belongs to the QueA family. In terms of assembly, monomer.

The protein localises to the cytoplasm. It carries out the reaction 7-aminomethyl-7-carbaguanosine(34) in tRNA + S-adenosyl-L-methionine = epoxyqueuosine(34) in tRNA + adenine + L-methionine + 2 H(+). It functions in the pathway tRNA modification; tRNA-queuosine biosynthesis. Its function is as follows. Transfers and isomerizes the ribose moiety from AdoMet to the 7-aminomethyl group of 7-deazaguanine (preQ1-tRNA) to give epoxyqueuosine (oQ-tRNA). The sequence is that of S-adenosylmethionine:tRNA ribosyltransferase-isomerase from Staphylococcus epidermidis (strain ATCC 35984 / DSM 28319 / BCRC 17069 / CCUG 31568 / BM 3577 / RP62A).